Reading from the N-terminus, the 471-residue chain is N-succinylglutamate 5-semialdehyde dehydrogenase (471 aa).

G207 to G212 contacts NAD(+). Catalysis depends on residues E230 and C264.

The protein belongs to the aldehyde dehydrogenase family. AstD subfamily.

It carries out the reaction N-succinyl-L-glutamate 5-semialdehyde + NAD(+) + H2O = N-succinyl-L-glutamate + NADH + 2 H(+). It functions in the pathway amino-acid degradation; L-arginine degradation via AST pathway; L-glutamate and succinate from L-arginine: step 4/5. Catalyzes the NAD-dependent reduction of succinylglutamate semialdehyde into succinylglutamate. The protein is N-succinylglutamate 5-semialdehyde dehydrogenase of Novosphingobium aromaticivorans (strain ATCC 700278 / DSM 12444 / CCUG 56034 / CIP 105152 / NBRC 16084 / F199).